The chain runs to 107 residues: Nucleoid-associated protein A1E_05550 (107 aa).

The protein belongs to the YbaB/EbfC family. As to quaternary structure, homodimer.

The protein resides in the cytoplasm. Its subcellular location is the nucleoid. Binds to DNA and alters its conformation. May be involved in regulation of gene expression, nucleoid organization and DNA protection. In Rickettsia canadensis (strain McKiel), this protein is Nucleoid-associated protein A1E_05550.